The sequence spans 332 residues: 2,3-diketo-L-gulonate reductase (332 aa).

The Proton donor role is filled by His44. NAD(+) is bound by residues 168–174 (ITMVDMS), 224–225 (WK), and 304–306 (GHE).

The protein belongs to the LDH2/MDH2 oxidoreductase family. DlgD subfamily. Homodimer.

The protein localises to the cytoplasm. It catalyses the reaction 3-dehydro-L-gulonate + NAD(+) = 2,3-dioxo-L-gulonate + NADH + H(+). It carries out the reaction 3-dehydro-L-gulonate + NADP(+) = 2,3-dioxo-L-gulonate + NADPH + H(+). Catalyzes the reduction of 2,3-diketo-L-gulonate in the presence of NADH, to form 3-keto-L-gulonate. The protein is 2,3-diketo-L-gulonate reductase of Escherichia coli O1:K1 / APEC.